Reading from the N-terminus, the 547-residue chain is Chaperonin GroEL (547 aa).

ATP is bound by residues 29–32 (TLGP), 86–90 (DGTTT), Gly-413, and Asp-498.

The protein belongs to the chaperonin (HSP60) family. As to quaternary structure, forms a cylinder of 14 subunits composed of two heptameric rings stacked back-to-back. Interacts with the co-chaperonin GroES.

The protein resides in the cytoplasm. The enzyme catalyses ATP + H2O + a folded polypeptide = ADP + phosphate + an unfolded polypeptide.. Together with its co-chaperonin GroES, plays an essential role in assisting protein folding. The GroEL-GroES system forms a nano-cage that allows encapsulation of the non-native substrate proteins and provides a physical environment optimized to promote and accelerate protein folding. This chain is Chaperonin GroEL, found in Herpetosiphon aurantiacus (strain ATCC 23779 / DSM 785 / 114-95).